The sequence spans 339 residues: MMGVQICQGMMSEIPFFSPPPQFSYMMNKNIRLHTDSNIRNTFFTDIGIGISANSLLLLFNIFKLTRGQRSRLTDLPIGLLSLINLLMLLMAAFIATDTFISWKGWDDIICKFLVYLYRTFRGLSLCTSCLLSVLQAIILSPRSSCLAKFKHKPPHHISCAILSLSVLYMFIGSHLLVSIIATPNLTTNDFIHVTQSCSILPMSYLMQCMFSTLLAIRDVFLISLMVLSTWYMVALLCRHRKQTRHLQGTSLSPKASPEQRATRSILMLMSLFVLMSVFDSIVCSSRTMYLNDPISYSIQLFMVHIYATVSPFVFIVTEKHIVNFLRSVCEGDECLNIH.

Residues 1-42 (MMGVQICQGMMSEIPFFSPPPQFSYMMNKNIRLHTDSNIRNT) are Extracellular-facing. Residues 43–63 (FFTDIGIGISANSLLLLFNIF) form a helical membrane-spanning segment. Over 64 to 75 (KLTRGQRSRLTD) the chain is Cytoplasmic. A helical transmembrane segment spans residues 76–96 (LPIGLLSLINLLMLLMAAFIA). Residues 97–119 (TDTFISWKGWDDIICKFLVYLYR) are Extracellular-facing. A disulfide bond links C111 and C198. Residues 120–140 (TFRGLSLCTSCLLSVLQAIIL) form a helical membrane-spanning segment. Over 141–160 (SPRSSCLAKFKHKPPHHISC) the chain is Cytoplasmic. Residues 161–181 (AILSLSVLYMFIGSHLLVSII) form a helical membrane-spanning segment. Topologically, residues 182 to 213 (ATPNLTTNDFIHVTQSCSILPMSYLMQCMFST) are extracellular. N-linked (GlcNAc...) asparagine glycosylation is present at N185. The chain crosses the membrane as a helical span at residues 214–234 (LLAIRDVFLISLMVLSTWYMV). The Cytoplasmic portion of the chain corresponds to 235-264 (ALLCRHRKQTRHLQGTSLSPKASPEQRATR). Residues 265–285 (SILMLMSLFVLMSVFDSIVCS) traverse the membrane as a helical segment. Topologically, residues 286-296 (SRTMYLNDPIS) are extracellular. The helical transmembrane segment at 297–317 (YSIQLFMVHIYATVSPFVFIV) threads the bilayer. The Cytoplasmic portion of the chain corresponds to 318 to 339 (TEKHIVNFLRSVCEGDECLNIH).

The protein belongs to the G-protein coupled receptor 1 family.

Its subcellular location is the cell membrane. Functionally, putative pheromone receptor implicated in the regulation of social as well as reproductive behavior. This is Vomeronasal type-1 receptor A14 from Rattus norvegicus (Rat).